The sequence spans 261 residues: Transmembrane protein 106A (261 aa).

The segment covering 1 to 10 (MGKAFSQLTS) has biased composition (polar residues). The tract at residues 1–22 (MGKAFSQLTSQKDEDKSILPDN) is disordered. A helical membrane pass occupies residues 93-113 (LSVFLAVTICLLIFSLTIFFL).

This sequence belongs to the TMEM106 family.

Its subcellular location is the cell membrane. Functionally, activates macrophages and polarizes them into M1-like macrophages through the activation of the MAPK and NF-kappaB signaling pathway. Upon activation, up-regulates the expression of CD80, CD86, CD69 and MHC II on macrophages, and induces the release of pro-inflammatory cytokines such as TNF, IL1B, IL6, CCL2 and nitric oxide. May play a role in inhibition of proliferation and migration. The protein is Transmembrane protein 106A (Tmem106a) of Rattus norvegicus (Rat).